Reading from the N-terminus, the 965-residue chain is Argonaute protein wago-4 (965 aa).

Positions 1–34 (MPALPPVYTPSGAPSSVHAPPAVPPVPVPTQPLR) are disordered. Over residues 10–20 (PSGAPSSVHAP) the composition is skewed to low complexity. Positions 21–30 (PAVPPVPVPT) are enriched in pro residues. The PAZ domain maps to 318–428 (PILDKLKEIT…YPMELLKISS (111 aa)). One can recognise a Piwi domain in the interval 594–924 (TFVFIITDDS…YAKRGRNLWN (331 aa)).

It belongs to the argonaute family. WAGO subfamily. Interacts with znfx-1; the interaction promotes the transmission of epigenetic information across generations. May interact with mina-1. In terms of tissue distribution, expressed in the hermaphrodite germline and in oocytes. Expressed at a low level in the male germline. Not expressed in the soma of hermaphrodites or males.

The protein resides in the cytoplasm. Its subcellular location is the perinuclear region. The protein localises to the cytoplasmic granule. Argonaute protein which is involved in the endogenous small interfering RNA (endo-siRNA) pathway and is required for RNA-mediated gene silencing (RNAi) in the germline. Interacts with secondary 22G-RNAs, which are RNA-dependent RNA polymerase-derived endo-siRNAs, typically 22 nucleotides in length with a 5'guanosine residue. Also interacts with the mRNA targets of 22G-RNAs. Associates with znfx-1 to mediate small RNA-directed transgenerational epigenetic inheritance of both germline- and soma-expressed genes. In Caenorhabditis elegans, this protein is Argonaute protein wago-4.